We begin with the raw amino-acid sequence, 116 residues long: Fluoride-specific ion channel FluC 1 (116 aa).

4 helical membrane passes run 1-21, 32-52, 54-74, and 93-113; these read MYAP…RYLV, FPLG…WLAG, GAAD…FTTF, and VVVY…LGYH. Positions 69 and 72 each coordinate Na(+).

The protein belongs to the fluoride channel Fluc/FEX (TC 1.A.43) family.

Its subcellular location is the cell membrane. It catalyses the reaction fluoride(in) = fluoride(out). With respect to regulation, na(+) is not transported, but it plays an essential structural role and its presence is essential for fluoride channel function. Fluoride-specific ion channel. Important for reducing fluoride concentration in the cell, thus reducing its toxicity. This is Fluoride-specific ion channel FluC 1 from Geobacillus kaustophilus (strain HTA426).